The primary structure comprises 188 residues: Peptidyl-tRNA hydrolase (188 aa).

Residue Tyr14 participates in tRNA binding. Residue His19 is the Proton acceptor of the active site. TRNA is bound by residues Tyr64, Asn66, and Asn112.

It belongs to the PTH family. As to quaternary structure, monomer.

The protein resides in the cytoplasm. The catalysed reaction is an N-acyl-L-alpha-aminoacyl-tRNA + H2O = an N-acyl-L-amino acid + a tRNA + H(+). Hydrolyzes ribosome-free peptidyl-tRNAs (with 1 or more amino acids incorporated), which drop off the ribosome during protein synthesis, or as a result of ribosome stalling. Functionally, catalyzes the release of premature peptidyl moieties from peptidyl-tRNA molecules trapped in stalled 50S ribosomal subunits, and thus maintains levels of free tRNAs and 50S ribosomes. This chain is Peptidyl-tRNA hydrolase, found in Leuconostoc mesenteroides subsp. mesenteroides (strain ATCC 8293 / DSM 20343 / BCRC 11652 / CCM 1803 / JCM 6124 / NCDO 523 / NBRC 100496 / NCIMB 8023 / NCTC 12954 / NRRL B-1118 / 37Y).